Here is a 111-residue protein sequence, read N- to C-terminus: UPF0321 protein P20C8.02c (111 aa).

A signal peptide spans 1-17; that stretch reads MLLLFCICCVFIKLVLA. N-linked (GlcNAc...) asparagine glycosylation occurs at Asn-20.

Belongs to the UPF0321 family.

The chain is UPF0321 protein P20C8.02c from Schizosaccharomyces pombe (strain 972 / ATCC 24843) (Fission yeast).